Reading from the N-terminus, the 394-residue chain is Probable fimbrial assembly protein FimD, serogroup H1 (394 aa).

This is Probable fimbrial assembly protein FimD, serogroup H1 (fimD) from Dichelobacter nodosus (Bacteroides nodosus).